A 316-amino-acid polypeptide reads, in one-letter code: Fe-S cluster assembly protein DRE2 (316 aa).

The interval 4-156 is N-terminal SAM-like domain; sequence SMPVATTVAA…KPQHVASTSV (153 aa). Positions 157-202 are linker; the sequence is PLKSRQPGALLNRKKTDPAKKQALWALSSPSTPKIDPEALLTAEDK. [2Fe-2S] cluster-binding residues include Cys209, Cys223, Cys226, and Cys228. Positions 209–228 are fe-S binding site A; the sequence is CEPVRSSAPRRKKACKSCSC. The [4Fe-4S] cluster site is built by Cys279, Cys282, Cys290, and Cys293. Short sequence motifs (cx2C motif) lie at residues 279-282 and 290-293; these read CGSC and CAGC. The tract at residues 279 to 293 is fe-S binding site B; that stretch reads CGSCFLGDAFRCAGC.

Belongs to the anamorsin family. In terms of assembly, monomer. Interacts with TAH18. Interacts with MIA40. It depends on [2Fe-2S] cluster as a cofactor. [4Fe-4S] cluster serves as cofactor.

It localises to the cytoplasm. The protein localises to the mitochondrion intermembrane space. Its function is as follows. Component of the cytosolic iron-sulfur (Fe-S) protein assembly (CIA) machinery required for the maturation of extramitochondrial Fe-S proteins. Part of an electron transfer chain functioning in an early step of cytosolic Fe-S biogenesis, facilitating the de novo assembly of a [4Fe-4S] cluster on the scaffold complex CFD1-NBP35. Electrons are transferred to DRE2 from NADPH via the FAD- and FMN-containing protein TAH18. TAH18-DRE2 are also required for the assembly of the diferric tyrosyl radical cofactor of ribonucleotide reductase (RNR), probably by providing electrons for reduction during radical cofactor maturation in the catalytic small subunit RNR2. The chain is Fe-S cluster assembly protein DRE2 from Laccaria bicolor (strain S238N-H82 / ATCC MYA-4686) (Bicoloured deceiver).